A 405-amino-acid polypeptide reads, in one-letter code: Probable dual-specificity RNA methyltransferase RlmN (405 aa).

Residues 1–15 are compositionally biased toward low complexity; the sequence is MSSTGSSVSTSGLVL. Residues 1–34 form a disordered region; that stretch reads MSSTGSSVSTSGLVLPSTPLAEPGKEVPLVVNTP. Catalysis depends on Glu130, which acts as the Proton acceptor. The 245-residue stretch at 142-386 folds into the Radical SAM core domain; the sequence is SAARATLCLS…VTVRDTRGSE (245 aa). Cys149 and Cys391 form a disulfide bridge. [4Fe-4S] cluster is bound by residues Cys156, Cys160, and Cys163. S-adenosyl-L-methionine-binding positions include 211–212, Ser245, 268–270, and Asn348; these read GE and SLH. Residue Cys391 is the S-methylcysteine intermediate of the active site.

Belongs to the radical SAM superfamily. RlmN family. Requires [4Fe-4S] cluster as cofactor.

The protein resides in the cytoplasm. It carries out the reaction adenosine(2503) in 23S rRNA + 2 reduced [2Fe-2S]-[ferredoxin] + 2 S-adenosyl-L-methionine = 2-methyladenosine(2503) in 23S rRNA + 5'-deoxyadenosine + L-methionine + 2 oxidized [2Fe-2S]-[ferredoxin] + S-adenosyl-L-homocysteine. It catalyses the reaction adenosine(37) in tRNA + 2 reduced [2Fe-2S]-[ferredoxin] + 2 S-adenosyl-L-methionine = 2-methyladenosine(37) in tRNA + 5'-deoxyadenosine + L-methionine + 2 oxidized [2Fe-2S]-[ferredoxin] + S-adenosyl-L-homocysteine. In terms of biological role, specifically methylates position 2 of adenine 2503 in 23S rRNA and position 2 of adenine 37 in tRNAs. The polypeptide is Probable dual-specificity RNA methyltransferase RlmN (Cutibacterium acnes (strain DSM 16379 / KPA171202) (Propionibacterium acnes)).